We begin with the raw amino-acid sequence, 513 residues long: 5-aminolevulinate synthase, erythroid-specific, mitochondrial (513 aa).

The transit peptide at M1–R18 directs the protein to the mitochondrion. R98 lines the succinyl-CoA pocket. Residues C190 and F191 each contribute to the pyridoxal 5'-phosphate site. Succinyl-CoA is bound by residues S212 and K231. Pyridoxal 5'-phosphate-binding residues include S264, H292, and T320. K323 is a catalytic residue. At K323 the chain carries N6-(pyridoxal phosphate)lysine. Positions 352 and 353 each coordinate pyridoxal 5'-phosphate. T437 serves as a coordination point for succinyl-CoA.

The protein belongs to the class-II pyridoxal-phosphate-dependent aminotransferase family. Homodimer. The cofactor is pyridoxal 5'-phosphate. Erythroid-specific.

Its subcellular location is the mitochondrion inner membrane. It carries out the reaction succinyl-CoA + glycine + H(+) = 5-aminolevulinate + CO2 + CoA. It participates in porphyrin-containing compound metabolism; protoporphyrin-IX biosynthesis; 5-aminolevulinate from glycine: step 1/1. Catalyzes the pyridoxal 5'-phosphate (PLP)-dependent condensation of succinyl-CoA and glycine to form aminolevulinic acid (ALA), with CoA and CO2 as by-products. Contributes significantly to heme formation during erythropoiesis. This is 5-aminolevulinate synthase, erythroid-specific, mitochondrial (ALAS2) from Gallus gallus (Chicken).